The primary structure comprises 155 residues: Small ribosomal subunit protein uS7 (155 aa).

It belongs to the universal ribosomal protein uS7 family. In terms of assembly, part of the 30S ribosomal subunit. Contacts proteins S9 and S11.

In terms of biological role, one of the primary rRNA binding proteins, it binds directly to 16S rRNA where it nucleates assembly of the head domain of the 30S subunit. Is located at the subunit interface close to the decoding center, probably blocks exit of the E-site tRNA. The chain is Small ribosomal subunit protein uS7 from Thermotoga neapolitana (strain ATCC 49049 / DSM 4359 / NBRC 107923 / NS-E).